A 237-amino-acid chain; its full sequence is Large ribosomal subunit protein uL1 (237 aa).

It belongs to the universal ribosomal protein uL1 family. As to quaternary structure, part of the 50S ribosomal subunit.

Its function is as follows. Binds directly to 23S rRNA. The L1 stalk is quite mobile in the ribosome, and is involved in E site tRNA release. Functionally, protein L1 is also a translational repressor protein, it controls the translation of the L11 operon by binding to its mRNA. The protein is Large ribosomal subunit protein uL1 of Myxococcus xanthus (strain DK1622).